The primary structure comprises 270 residues: Protoheme IX farnesyltransferase (270 aa).

A run of 7 helical transmembrane segments spans residues 13-30 (LALLNGIAAVAGHALVPD), 33-53 (HATLWVALAGVAILAAGGSAL), 95-115 (LLVLAAGGPVPPLLGAVALAW), 129-149 (LALAIGAVSGALPPVIGWTLA), 156-176 (YRIILLAGIFFLWQVPHFWLF), 207-227 (LWLGALAASVLLLPAFGLMAP), and 249-269 (EATLFSCLNAFPPLMALALLL).

This sequence belongs to the UbiA prenyltransferase family. Protoheme IX farnesyltransferase subfamily.

The protein localises to the cell inner membrane. It carries out the reaction heme b + (2E,6E)-farnesyl diphosphate + H2O = Fe(II)-heme o + diphosphate. The protein operates within porphyrin-containing compound metabolism; heme O biosynthesis; heme O from protoheme: step 1/1. In terms of biological role, converts heme B (protoheme IX) to heme O by substitution of the vinyl group on carbon 2 of heme B porphyrin ring with a hydroxyethyl farnesyl side group. This chain is Protoheme IX farnesyltransferase, found in Geobacter sulfurreducens (strain ATCC 51573 / DSM 12127 / PCA).